Here is a 196-residue protein sequence, read N- to C-terminus: Endonuclease V (196 aa).

Asp-37 and Asp-98 together coordinate Mg(2+).

The protein belongs to the endonuclease V family. Mg(2+) is required as a cofactor.

The protein localises to the cytoplasm. It catalyses the reaction Endonucleolytic cleavage at apurinic or apyrimidinic sites to products with a 5'-phosphate.. In terms of biological role, DNA repair enzyme involved in the repair of deaminated bases. Selectively cleaves double-stranded DNA at the second phosphodiester bond 3' to a deoxyinosine leaving behind the intact lesion on the nicked DNA. This is Endonuclease V from Sulfolobus acidocaldarius (strain ATCC 33909 / DSM 639 / JCM 8929 / NBRC 15157 / NCIMB 11770).